We begin with the raw amino-acid sequence, 95 residues long: RING finger protein Z (95 aa).

G2 is lipidated: N-myristoyl glycine; by host. Residues 38–74 (CKSCWFANRGLIACSDHYLCLNCLTRLRSQSQFCGIC) form an RING-type; atypical zinc finger. A PTAP/PSAP motif motif is present at residues 88–91 (PSAP).

This sequence belongs to the arenaviridae Z protein family. In terms of assembly, interacts with protein NP; this interaction probably directs the encapsidated genome to budding sites. Interacts (via RING domain) with polymerase L; this interaction inhibits viral transcription and replication, Z partially blocks the product exit tunnel for the releasing nascent RNA product. Interacts with the glycoprotein complex; this interaction plays a role in virion budding. Interacts with host eIF4E; this interaction results in eIF4E reduced affinity for its substrate, the 5'-m7 G cap structure. Interacts (via late-budding domain) with host TSG101; this interaction is essential for budding and release of viral particles. Interacts with host RPLP0; this interaction may serve to load ribosome-like particles inside the virion. Interacts with host PML; this interaction induces PML bodies redistribution in the cytoplasm upon viral infection. Myristoylation is required for the role of RING finger protein Z in assembly and budding.

The protein resides in the virion. It localises to the host cytoplasm. It is found in the host perinuclear region. The protein localises to the host cell membrane. In terms of biological role, plays a crucial role in virion assembly and budding. Expressed late in the virus life cycle, it acts as an inhibitor of viral transcription and RNA synthesis by interacting with the viral polymerase L. Presumably recruits the NP encapsidated genome to cellular membranes at budding sites via direct interaction with NP. Plays critical roles in the final steps of viral release by interacting with host TSG101, a member of the vacuolar protein-sorting pathway and using other cellular host proteins involved in vesicle formation pathway. The budding of the virus progeny occurs after association of protein Z with the viral glycoprotein complex SSP-GP1-GP2 at the cell periphery, step that requires myristoylation of protein Z. Also selectively represses protein production by associating with host eIF4E. In cell-based minigenome assay, has an inhibitory effect on the ribonucleoprotein machinery (vRNP), which is responsible for the replication and transcription of the viral genome. The polypeptide is RING finger protein Z (Pirital mammarenavirus (isolate Rat/Venezuela/VAV-488/1995) (PIRV)).